Here is a 197-residue protein sequence, read N- to C-terminus: Transcription factor FapR (197 aa).

The protein belongs to the FapR family.

Functionally, transcriptional factor involved in regulation of membrane lipid biosynthesis by repressing genes involved in fatty acid and phospholipid metabolism. The sequence is that of Transcription factor FapR from Bacillus cereus (strain B4264).